The following is a 368-amino-acid chain: Protein pxr1 (368 aa).

Disordered stretches follow at residues 1–28 and 161–339; these read MGLA…TDSF and KEKA…PMGI. Residues 15 to 27 are compositionally biased toward polar residues; that stretch reads DPNNTRWSGNTDS. In terms of domain architecture, G-patch spans 25–79; the sequence is TDSFGHRMMKSQGWTPGEYLGAKDAAHAEFHTEANASHIRVVIKDNTLGLGAKIG. The span at 168 to 182 shows a compositional bias: acidic residues; it reads SSEESDSSSDEEEEK. Composition is skewed to basic residues over residues 209–226, 242–254, 271–283, and 301–312; these read SKKS…KSKK, KSKK…KSKS, KARK…KKRK, and SSKKSKKDKHKS. Positions 313–324 are enriched in low complexity; sequence PSTSKTSTKEST. A compositionally biased stretch (polar residues) spans 325 to 334; sequence PIVSESSGRS.

The protein belongs to the PINX1 family.

The protein resides in the nucleus. Its subcellular location is the nucleolus. Its function is as follows. Involved in rRNA-processing at A0, A1 and A2 sites and negatively regulates telomerase. The protein is Protein pxr1 (pxr1) of Botryotinia fuckeliana (strain B05.10) (Noble rot fungus).